The chain runs to 485 residues: Serine/threonine-protein kinase dst4 (485 aa).

In terms of domain architecture, Protein kinase spans 21-278 (FRVLEVIGQG…AVDLLNHPFI (258 aa)). ATP-binding positions include 27-35 (IGQGSFGVV) and Lys50. The active-site Proton acceptor is Asp142. 3 disordered regions span residues 304–343 (RRKK…SAGL), 360–424 (VMRE…GSVV), and 436–485 (SMKL…NQDD). The span at 310–324 (EEEAEEAEEGDDYDD) shows a compositional bias: acidic residues. The segment covering 370–393 (SNNGGTFIYNNNNNNSSKTSSSGT) has biased composition (low complexity). Acidic residues-rich tracts occupy residues 406-417 (DDDDDDDIEEGG) and 450-468 (SSDE…EEGG). Positions 474–485 (VVYTKSPVNQDD) are enriched in polar residues.

It belongs to the protein kinase superfamily. STE Ser/Thr protein kinase family. STE20 subfamily. It depends on Mg(2+) as a cofactor.

The catalysed reaction is L-seryl-[protein] + ATP = O-phospho-L-seryl-[protein] + ADP + H(+). It catalyses the reaction L-threonyl-[protein] + ATP = O-phospho-L-threonyl-[protein] + ADP + H(+). In Dictyostelium discoideum (Social amoeba), this protein is Serine/threonine-protein kinase dst4.